Here is a 69-residue protein sequence, read N- to C-terminus: Large ribosomal subunit protein bL28 (69 aa).

This sequence belongs to the bacterial ribosomal protein bL28 family.

The chain is Large ribosomal subunit protein bL28 from Aquifex aeolicus (strain VF5).